We begin with the raw amino-acid sequence, 140 residues long: MTYRLPFVAVILFVTAKHVVLALENANWIEASKTVPSDSTQTTRVAYRRITGGFNERFLRQLEKKPGVNDKRDEERANFFEAVFKNTLFNAFGYRSDAKAKLQDPNSNIFVNLLRRIFVWWAKNKPEFNKNADMHKEAMV.

The first 22 residues, 1-22 (MTYRLPFVAVILFVTAKHVVLA), serve as a signal peptide directing secretion. The short motif at 57–76 (RFLRQLEKKPGVNDKRDEER) is the RxLR-dEER element.

The protein belongs to the RxLR effector family.

Its subcellular location is the secreted. The protein localises to the host nucleus. It localises to the host cytoplasm. Secreted effector that completely suppresses the host cell death induced by cell death-inducing proteins. This Plasmopara viticola (Downy mildew of grapevine) protein is Secreted RxLR effector protein 37.